The sequence spans 223 residues: Small ribosomal subunit protein uS3 (223 aa).

In terms of domain architecture, KH type-2 spans 39–117 (IREHLRKKPS…RPELNAKLVA (79 aa)).

The protein belongs to the universal ribosomal protein uS3 family. Part of the 30S ribosomal subunit. Forms a tight complex with proteins S10 and S14.

Binds the lower part of the 30S subunit head. Binds mRNA in the 70S ribosome, positioning it for translation. In Chlamydia caviae (strain ATCC VR-813 / DSM 19441 / 03DC25 / GPIC) (Chlamydophila caviae), this protein is Small ribosomal subunit protein uS3.